Consider the following 230-residue polypeptide: Small ribosomal subunit protein uS3 (230 aa).

In terms of domain architecture, KH type-2 spans Val39–Arg107. The disordered stretch occupies residues Ser210–Asn230.

It belongs to the universal ribosomal protein uS3 family. Part of the 30S ribosomal subunit. Forms a tight complex with proteins S10 and S14.

Functionally, binds the lower part of the 30S subunit head. Binds mRNA in the 70S ribosome, positioning it for translation. This chain is Small ribosomal subunit protein uS3, found in Neisseria meningitidis serogroup C (strain 053442).